Consider the following 961-residue polypeptide: Vinculin (961 aa).

Repeat copies occupy residues 258 to 362 and 371 to 470. Positions 258–470 are 2 X repeats; it reads ELDNLTVLKK…LTQKLYELKA (213 aa). The tract at residues 720–778 is disordered; sequence AIAPPQPPPLPTSLPPPIPELSALHLSNQNAERAPPRPPLPREGLAPVRPPPPETDDED. Over residues 723–738 the composition is skewed to pro residues; that stretch reads PPQPPPLPTSLPPPIP. T774 bears the Phosphothreonine mark.

This sequence belongs to the vinculin/alpha-catenin family. As to quaternary structure, exhibits self-association properties.

The protein resides in the cytoplasm. It is found in the cytoskeleton. Its subcellular location is the cell junction. The protein localises to the adherens junction. It localises to the cell membrane. Functionally, involved in cell adhesion. May be involved in the attachment of the actin-based microfilaments to the plasma membrane. This chain is Vinculin (Vinc), found in Drosophila melanogaster (Fruit fly).